We begin with the raw amino-acid sequence, 158 residues long: Transcription antitermination protein NusB (158 aa).

This sequence belongs to the NusB family.

Functionally, involved in transcription antitermination. Required for transcription of ribosomal RNA (rRNA) genes. Binds specifically to the boxA antiterminator sequence of the ribosomal RNA (rrn) operons. The chain is Transcription antitermination protein NusB from Bartonella henselae (strain ATCC 49882 / DSM 28221 / CCUG 30454 / Houston 1) (Rochalimaea henselae).